Consider the following 708-residue polypeptide: Solute carrier family 15 member 1 (708 aa).

A helical membrane pass occupies residues 1-21; it reads MGMSKSYGCFGYPLSIFFIVV. The Extracellular segment spans residues 22–53; the sequence is NEFCERFSYYGMRALLILYFRRFIGWDDNLST. Residue asparagine 50 is glycosylated (N-linked (GlcNAc...) asparagine). A helical transmembrane segment spans residues 54 to 74; sequence AIYHTFVALCYLTPILGALIA. Residues 75–82 lie on the Cytoplasmic side of the membrane; sequence DSWLGKFK. The helical transmembrane segment at 83 to 103 threads the bilayer; the sequence is TIVSLSIVYTIGQAVTAVSSI. The Extracellular portion of the chain corresponds to 104-118; it reads NDLTDYNKDGTPDNL. Asparagine 117 is a glycosylation site (N-linked (GlcNAc...) asparagine). Residues 119–139 form a helical membrane-spanning segment; that stretch reads SVHVALSMIGLALIALGTGGI. Topologically, residues 140-161 are cytoplasmic; that stretch reads KPCVSAFGGDQFEEGQEKQRNR. The helical transmembrane segment at 162 to 182 threads the bilayer; sequence FFSIFYLAINAGSLISTIVTP. The Extracellular portion of the chain corresponds to 183–198; the sequence is MLRVHECGIYSQKACY. The helical transmembrane segment at 199 to 219 threads the bilayer; it reads PLAFGVPAALMAVSLIVFVIG. At 220–276 the chain is on the cytoplasmic side; sequence SGMYKKFQPQGNVMGKVVKCIGFALKNRFRHRSKQFPKREHWLDWAKEKYDERLISQ. A helical transmembrane segment spans residues 277–297; that stretch reads IKMVTKVMFLYIPLPMFWALF. Residues 298 to 327 are Extracellular-facing; it reads DQQGSRWTLQATAMSGKIGLLEVQPDQMQT. Residues 328–348 traverse the membrane as a helical segment; the sequence is VNAILIVVMVPIMDAVVYPLI. Topologically, residues 349–361 are cytoplasmic; the sequence is AKCGFNFTSLKRM. A helical transmembrane segment spans residues 362 to 382; that stretch reads TVGMFLASMAFVMAAIVQLEI. Over 383–584 the chain is Extracellular; it reads DKTLPVFPKQ…ISPNTVNMAL (202 aa). Positions 383–585 are extracellular domain (ECD); it reads DKTLPVFPKQ…SPNTVNMALQ (203 aa). N-linked (GlcNAc...) asparagine glycosylation is found at asparagine 408, asparagine 439, asparagine 495, asparagine 499, asparagine 509, asparagine 514, asparagine 527, and asparagine 539. Residues 585–605 traverse the membrane as a helical segment; it reads QIPQYFLITCGEVVFSVTGLE. Topologically, residues 606-619 are cytoplasmic; it reads FSYSQAPSNMKSVL. A helical transmembrane segment spans residues 620-640; the sequence is QAGWLLTVAVGNIIVLIVAGA. Residues 641–645 lie on the Extracellular side of the membrane; that stretch reads GQFSE. A helical membrane pass occupies residues 646–666; it reads QWAEYILFAALLLVVCVIFAI. The Cytoplasmic portion of the chain corresponds to 667–708; the sequence is MARFYTYVNPAEIEAQFDDDEKKNLEKMNVYSTVTPVSQTQM.

This sequence belongs to the major facilitator superfamily. Proton-dependent oligopeptide transporter (POT/PTR) (TC 2.A.17) family. In terms of assembly, interacts (via extracellular domain region) with trypsin.

The protein resides in the apical cell membrane. The enzyme catalyses a dipeptide(out) + H(+)(out) = a dipeptide(in) + H(+)(in). It catalyses the reaction an L-amino acid tripeptide(out) + H(+)(out) = an L-amino acid tripeptide(in) + H(+)(in). It carries out the reaction L-alanyl-L-lysine(out) + H(+)(out) = L-alanyl-L-lysine(in) + H(+)(in). The catalysed reaction is L-alanyl-L-proline(out) + H(+)(out) = L-alanyl-L-proline(in) + H(+)(in). The enzyme catalyses L-alanyl-L-valine(out) + H(+)(out) = L-alanyl-L-valine(in) + H(+)(in). It catalyses the reaction carnosine(out) + H(+)(out) = carnosine(in) + H(+)(in). It carries out the reaction glycyl-L-glutamine(out) + H(+)(out) = glycyl-L-glutamine(in) + H(+)(in). The catalysed reaction is glycyl-L-leucine(out) + H(+)(out) = glycyl-L-leucine(in) + H(+)(in). The enzyme catalyses glycyl-L-proline(out) + H(+)(out) = glycyl-L-proline(in) + H(+)(in). It catalyses the reaction glycyl-sarcosine(out) + H(+)(out) = glycyl-sarcosine(in) + H(+)(in). It carries out the reaction L-leucyl-L-leucine(out) + H(+)(out) = L-leucyl-L-leucine(in) + H(+)(in). The catalysed reaction is L-leucyl-L-proline(out) + H(+)(out) = L-leucyl-L-proline(in) + H(+)(in). The enzyme catalyses L-phenylalanyl-L-leucine(out) + H(+)(out) = L-phenylalanyl-L-leucine(in) + H(+)(in). It catalyses the reaction L-phenylalanyl-L-phenylalanine(out) + H(+)(out) = L-phenylalanyl-L-phenylalanine(in) + H(+)(in). It carries out the reaction L-lysyl-glycine(out) + H(+)(out) = L-lysyl-glycine(in) + H(+)(in). The catalysed reaction is L-tyrosylglycine(out) + H(+)(out) = L-tyrosylglycine(in) + H(+)(in). The enzyme catalyses L-alanyl-L-aspartate(out) + 2 H(+)(out) = L-alanyl-L-aspartate(in) + 2 H(+)(in). It catalyses the reaction L-aspartyl-glycine(out) + 2 H(+)(out) = L-aspartyl-glycine(in) + 2 H(+)(in). It carries out the reaction glycyl-L-aspartate(out) + 2 H(+)(out) = glycyl-L-aspartate(in) + 2 H(+)(in). The catalysed reaction is glycyl-L-glutamate(out) + 2 H(+)(out) = glycyl-L-glutamate(in) + 2 H(+)(in). The enzyme catalyses L-alanyl-L-leucyl-L-alanine(out) + H(+)(out) = L-alanyl-L-leucyl-L-alanine(in) + H(+)(in). It catalyses the reaction L-alanyl-L-prolylglycine(out) + H(+)(out) = L-alanyl-L-prolylglycine(in) + H(+)(in). It carries out the reaction glycylglycyl-L-isoleucine(out) + H(+)(out) = glycylglycyl-L-isoleucine(in) + H(+)(in). The catalysed reaction is glycylglycyl-L-proline(out) + H(+)(out) = glycylglycyl-L-proline(in) + H(+)(in). The enzyme catalyses L-methionyl-L-phenylalanyl-L-methionine(out) + H(+)(out) = L-methionyl-L-phenylalanyl-L-methionine(in) + H(+)(in). It catalyses the reaction N-acetyl-D-muramoyl-L-alanyl-D-isoglutamine(out) + 2 H(+)(out) = N-acetyl-D-muramoyl-L-alanyl-D-isoglutamine(in) + 2 H(+)(in). It carries out the reaction N(alpha)-formyl-L-methionyl-L-leucyl-L-phenylalanine(out) + 2 H(+)(out) = N(alpha)-formyl-L-methionyl-L-leucyl-L-phenylalanine(in) + 2 H(+)(in). Functionally, electrogenic proton-coupled amino-acid transporter that transports oligopeptides of 2 to 4 amino acids with a preference for dipeptides. Transports neutral and monovalently charged peptides with a proton to peptide stoichiometry of 1:1 or 2:1. Primarily responsible for the absorption of dietary di- and tripeptides from the small intestinal lumen. Mediates transepithelial transport of muramyl and N-formylated bacterial dipeptides contributing to recognition of pathogenic bacteria by the mucosal immune system. This is Solute carrier family 15 member 1 (SLC15A1) from Canis lupus familiaris (Dog).